Reading from the N-terminus, the 225-residue chain is MSIKQWPEGERPREKLLERGAAALSDAELLAILLRVGTRGMSAVDLARYLLQEFGSLGRLMSAEVGKLSAYKGMGTASFTQFAVVREIGRRILAEELQESIVLSDPDTVADYLRFHLGQEKVEVSVALLLNRQNQLIAVRELSRGTVAENTIYIREIVKLALDEYADSLIIAHNHPGGSPEPSQEDIMFTRRLAQAMSLVDVSLLDHFIVTSQSVRSFRQLGLMP.

One can recognise an MPN domain in the interval 102–224 (VLSDPDTVAD…VRSFRQLGLM (123 aa)). Residues His173, His175, and Asp186 each coordinate Zn(2+). The short motif at 173-186 (HNHPGGSPEPSQED) is the JAMM motif element.

Belongs to the UPF0758 family.

The sequence is that of UPF0758 protein NMC1174 from Neisseria meningitidis serogroup C / serotype 2a (strain ATCC 700532 / DSM 15464 / FAM18).